Reading from the N-terminus, the 96-residue chain is Pyrimidine/purine nucleoside phosphorylase (96 aa).

It belongs to the nucleoside phosphorylase PpnP family.

It catalyses the reaction a purine D-ribonucleoside + phosphate = a purine nucleobase + alpha-D-ribose 1-phosphate. It carries out the reaction adenosine + phosphate = alpha-D-ribose 1-phosphate + adenine. The catalysed reaction is cytidine + phosphate = cytosine + alpha-D-ribose 1-phosphate. The enzyme catalyses guanosine + phosphate = alpha-D-ribose 1-phosphate + guanine. It catalyses the reaction inosine + phosphate = alpha-D-ribose 1-phosphate + hypoxanthine. It carries out the reaction thymidine + phosphate = 2-deoxy-alpha-D-ribose 1-phosphate + thymine. The catalysed reaction is uridine + phosphate = alpha-D-ribose 1-phosphate + uracil. The enzyme catalyses xanthosine + phosphate = alpha-D-ribose 1-phosphate + xanthine. Its function is as follows. Catalyzes the phosphorolysis of diverse nucleosides, yielding D-ribose 1-phosphate and the respective free bases. Can use uridine, adenosine, guanosine, cytidine, thymidine, inosine and xanthosine as substrates. Also catalyzes the reverse reactions. The protein is Pyrimidine/purine nucleoside phosphorylase of Serratia proteamaculans (strain 568).